A 329-amino-acid polypeptide reads, in one-letter code: Interleukin-12 subunit beta (329 aa).

An N-terminal signal peptide occupies residues methionine 1–alanine 22. An Ig-like C2-type domain is found at isoleucine 23–lysine 106. An intrachain disulfide couples cysteine 50 to cysteine 90. 2 N-linked (GlcNAc...) asparagine glycosylation sites follow: asparagine 135 and asparagine 223. Positions proline 238–serine 329 constitute a Fibronectin type-III domain.

It belongs to the IL-12B family. In terms of assembly, heterodimer with IL12A; disulfide-linked. The heterodimer is known as interleukin IL-12. Heterodimer with IL23A; disulfide-linked. The heterodimer is known as interleukin IL-23. Also secreted as a monomer. Interacts with NBR1; this interaction promotes IL-12 secretion.

The protein localises to the secreted. In terms of biological role, cytokine that can act as a growth factor for activated T and NK cells, enhance the lytic activity of NK/lymphokine-activated killer cells, and stimulate the production of IFN-gamma by resting PBMC. Functionally, associates with IL23A to form the IL-23 interleukin, a heterodimeric cytokine which functions in innate and adaptive immunity. IL-23 may constitute with IL-17 an acute response to infection in peripheral tissues. IL-23 binds to a heterodimeric receptor complex composed of IL12RB1 and IL23R, activates the Jak-Stat signaling cascade, stimulates memory rather than naive T-cells and promotes production of pro-inflammatory cytokines. IL-23 induces autoimmune inflammation and thus may be responsible for autoimmune inflammatory diseases and may be important for tumorigenesis. In Felis catus (Cat), this protein is Interleukin-12 subunit beta (IL12B).